A 207-amino-acid polypeptide reads, in one-letter code: Large ribosomal subunit protein bL25 (207 aa).

The protein belongs to the bacterial ribosomal protein bL25 family. CTC subfamily. In terms of assembly, part of the 50S ribosomal subunit; part of the 5S rRNA/L5/L18/L25 subcomplex. Contacts the 5S rRNA. Binds to the 5S rRNA independently of L5 and L18.

This is one of the proteins that binds to the 5S RNA in the ribosome where it forms part of the central protuberance. This chain is Large ribosomal subunit protein bL25, found in Paraburkholderia xenovorans (strain LB400).